The following is a 57-amino-acid chain: Protein translocase subunit SecE (57 aa).

The chain crosses the membrane as a helical span at residues 34 to 54 (AGILLIGAIGFLVFLIMGGIV).

It belongs to the SecE/SEC61-gamma family. Component of the Sec protein translocase complex. Heterotrimer consisting of SecY (alpha), SecG (beta) and SecE (gamma) subunits. The heterotrimers can form oligomers, although 1 heterotrimer is thought to be able to translocate proteins. Interacts with the ribosome. May interact with SecDF, and other proteins may be involved.

The protein localises to the cell membrane. Functionally, essential subunit of the Sec protein translocation channel SecYEG. Clamps together the 2 halves of SecY. May contact the channel plug during translocation. The sequence is that of Protein translocase subunit SecE from Halobacterium salinarum (strain ATCC 29341 / DSM 671 / R1).